Consider the following 240-residue polypeptide: ATP-dependent dethiobiotin synthetase BioD (240 aa).

Residue 15–20 participates in ATP binding; that stretch reads EIGKTF. Threonine 19 provides a ligand contact to Mg(2+). Lysine 40 is an active-site residue. Residues aspartate 57, 118 to 121, and 178 to 179 each bind ATP; these read EGVG and NR. Residues aspartate 57 and glutamate 118 each contribute to the Mg(2+) site.

It belongs to the dethiobiotin synthetase family. In terms of assembly, homodimer. The cofactor is Mg(2+).

It localises to the cytoplasm. The catalysed reaction is (7R,8S)-7,8-diammoniononanoate + CO2 + ATP = (4R,5S)-dethiobiotin + ADP + phosphate + 3 H(+). Its pathway is cofactor biosynthesis; biotin biosynthesis; biotin from 7,8-diaminononanoate: step 1/2. In terms of biological role, catalyzes a mechanistically unusual reaction, the ATP-dependent insertion of CO2 between the N7 and N8 nitrogen atoms of 7,8-diaminopelargonic acid (DAPA, also called 7,8-diammoniononanoate) to form a ureido ring. The polypeptide is ATP-dependent dethiobiotin synthetase BioD (Burkholderia pseudomallei (strain K96243)).